Consider the following 205-residue polypeptide: Keratin-associated protein 4-6 (205 aa).

Repeat copies occupy residues 20 to 24 (CCRPS), 25 to 29 (CCQTT), 30 to 34 (CCRTT), 35 to 39 (CCRPS), 40 to 44 (CCVSS), 45 to 49 (CCRPQ), 50 to 54 (CCQSV), 55 to 59 (CCQPT), 60 to 64 (CCRPS), 65 to 68 (CCPS), 69 to 73 (CCQTT), 74 to 78 (CCRTT), 79 to 83 (CCRPS), 84 to 88 (CCVSS), 89 to 93 (CCRPQ), 94 to 98 (CCQSV), 99 to 103 (CCQPT), 104 to 108 (CCRPS), 114 to 118 (CCRPS), 119 to 123 (CCVSR), 124 to 128 (CCRSQ), 129 to 133 (CCQSV), 134 to 138 (CCQPT), 139 to 143 (CCRPS), 144 to 148 (CCISS), 149 to 153 (CCRPS), 154 to 158 (CCESS), 159 to 163 (CCRPC), 164 to 168 (CCRPC), and 169 to 173 (CCLRP). The interval 20–173 (CCRPSCCQTT…CCRPCCCLRP (154 aa)) is 30 X 5 AA repeats of C-C-[IRQVEL]-[SPTR]-[STVQRCP].

The protein belongs to the KRTAP type 4 family. Interacts with hair keratins. In terms of tissue distribution, expressed in the hair follicles.

In the hair cortex, hair keratin intermediate filaments are embedded in an interfilamentous matrix, consisting of hair keratin-associated proteins (KRTAP), which are essential for the formation of a rigid and resistant hair shaft through their extensive disulfide bond cross-linking with abundant cysteine residues of hair keratins. The matrix proteins include the high-sulfur and high-glycine-tyrosine keratins. This Homo sapiens (Human) protein is Keratin-associated protein 4-6 (KRTAP4-6).